The sequence spans 409 residues: Probable plastid-lipid-associated protein 12, chloroplastic (409 aa).

The transit peptide at 1–55 (MVAVRFYAVEMSLPCLCPCPSSPISLSLCSPRFNLLNTTSRRLGLSRNCRTLRIS) directs the protein to the chloroplast.

The protein belongs to the PAP/fibrillin family.

The protein localises to the plastid. The protein resides in the chloroplast thylakoid. In Arabidopsis thaliana (Mouse-ear cress), this protein is Probable plastid-lipid-associated protein 12, chloroplastic (PAP12).